A 189-amino-acid polypeptide reads, in one-letter code: Small ribosomal subunit protein uS5 (189 aa).

Residues F20 to V83 enclose the S5 DRBM domain.

It belongs to the universal ribosomal protein uS5 family. Part of the 30S ribosomal subunit. Contacts proteins S4 and S8.

In terms of biological role, with S4 and S12 plays an important role in translational accuracy. Its function is as follows. Located at the back of the 30S subunit body where it stabilizes the conformation of the head with respect to the body. This is Small ribosomal subunit protein uS5 from Methylocella silvestris (strain DSM 15510 / CIP 108128 / LMG 27833 / NCIMB 13906 / BL2).